Here is a 418-residue protein sequence, read N- to C-terminus: Putative ion-transport protein YfeO (418 aa).

A run of 12 helical transmembrane segments spans residues 10–30, 54–74, 99–119, 120–140, 149–169, 186–206, 223–243, 258–278, 300–320, 322–342, 343–363, and 371–391; these read LLLS…LIVV, DSPI…GLVI, ALPG…SLGP, EHPI…RLLP, ILAS…AALI, LFAP…FFHP, ILSG…AVWC, VLVL…GGPV, DYFL…ASGF, GGRI…LHEH, VPAV…VLVV, and LFMA…CIVM.

This sequence belongs to the chloride channel (TC 2.A.49) family.

It is found in the cell membrane. In Shigella sonnei (strain Ss046), this protein is Putative ion-transport protein YfeO.